Consider the following 215-residue polypeptide: MQSVNQLKIDRLACQRGDKILFTDLSFNLQSGDFVQIEGHNGIGKTSLLRILAGLAQPLSGKVRWNSEEISKCREEYYYDLLYLGHHAGIKPELTAWENLKFYQQAGHCRQGDEILWNVLEKVGLLGREDIVASQLSAGQQKRIALARLWISQAPLWILDEPFNAIDKNGVKVLTGLFEQQAEKGGIVILTSHQEVPSSALTVLNLAQYKFTDNE.

Residues 7–209 form the ABC transporter domain; that stretch reads LKIDRLACQR…ALTVLNLAQY (203 aa). Residue 39 to 46 coordinates ATP; it reads GHNGIGKT.

Belongs to the ABC transporter superfamily. CcmA exporter (TC 3.A.1.107) family. In terms of assembly, the complex is composed of two ATP-binding proteins (CcmA) and two transmembrane proteins (CcmB).

The protein localises to the cell inner membrane. It catalyses the reaction heme b(in) + ATP + H2O = heme b(out) + ADP + phosphate + H(+). Functionally, part of the ABC transporter complex CcmAB involved in the biogenesis of c-type cytochromes; once thought to export heme, this seems not to be the case, but its exact role is uncertain. Responsible for energy coupling to the transport system. The chain is Cytochrome c biogenesis ATP-binding export protein CcmA from Mannheimia succiniciproducens (strain KCTC 0769BP / MBEL55E).